A 582-amino-acid polypeptide reads, in one-letter code: DNA repair and recombination protein radC (582 aa).

Residues 146-150 (KRALR) mediate DNA binding. The span at 194–204 (KKEPMRVKPSL) shows a compositional bias: basic and acidic residues. Disordered stretches follow at residues 194 to 226 (KKEP…NSAA), 310 to 400 (QIPN…INGQ), and 485 to 582 (APSG…QHQH). A compositionally biased stretch (polar residues) spans 326–335 (QNQYTNQRQS). Positions 516–529 (AAAQNNTAAANRMA) are enriched in low complexity.

It belongs to the RAD52 family. Part of a complex that includes RAD51, RAD52 and RAD59.

Its subcellular location is the nucleus. Involved in DNA double-strand break (DSB) repair and recombination. Promotes the annealing of complementary single-stranded DNA and by stimulation of the RAD51 recombinase. The sequence is that of DNA repair and recombination protein radC (radC) from Emericella nidulans (strain FGSC A4 / ATCC 38163 / CBS 112.46 / NRRL 194 / M139) (Aspergillus nidulans).